The chain runs to 208 residues: AN1-type zinc finger protein 6 (208 aa).

Residues 8 to 42 (SQVPMLCSTGCGFYGNPRTNGMCSVCYKEHLQRQN) form an A20-type zinc finger. Residues Cys14, Cys18, Cys30, and Cys33 each contribute to the Zn(2+) site. The span at 41-68 (QNSSNGRISPPATSVSSLSESLPVQCTD) shows a compositional bias: polar residues. The tract at residues 41–140 (QNSSNGRISP…PSEEQSKSLE (100 aa)) is disordered. At Ser49 the chain carries Phosphoserine. The segment covering 80 to 94 (STSSSMQPSPVSNQS) has biased composition (low complexity). Composition is skewed to polar residues over residues 95–110 (LLSESVASSQLDSTSV) and 120–133 (VQASVSDTAQQPSE). The segment at 143–189 (KQKKNRCFMCRKKVGLTGFECRCGNVYCGVHRYSDVHNCSYNYKADA) adopts an AN1-type zinc-finger fold. Cys149, Cys152, Cys163, Cys165, Cys170, His173, His179, and Cys181 together coordinate Zn(2+). Position 204 is an N6-acetyllysine (Lys204).

As to quaternary structure, interacts with PKN1. Interacts with TRAF2. Interacts with mono- and polyubiquitin. Interacts with PEX6. Interacts with PEX5 (Cys-linked ubiquitinated). As to expression, widely expressed with high level in heart, skeletal muscle, liver, kidney and placenta.

Its subcellular location is the cytoplasm. Involved in regulation of TNF-alpha induced NF-kappa-B activation and apoptosis. Involved in modulation of 'Lys-48'-linked polyubiquitination status of TRAF2 and decreases association of TRAF2 with RIPK1. Required for PTS1 target sequence-dependent protein import into peroxisomes and PEX5 stability; may cooperate with PEX6. In vitro involved in PEX5 export from the cytosol to peroxisomes. This chain is AN1-type zinc finger protein 6 (ZFAND6), found in Homo sapiens (Human).